The sequence spans 367 residues: Phosphoribosylaminoimidazole-succinocarboxamide synthase (367 aa).

This sequence belongs to the SAICAR synthetase family.

It catalyses the reaction 5-amino-1-(5-phospho-D-ribosyl)imidazole-4-carboxylate + L-aspartate + ATP = (2S)-2-[5-amino-1-(5-phospho-beta-D-ribosyl)imidazole-4-carboxamido]succinate + ADP + phosphate + 2 H(+). It participates in purine metabolism; IMP biosynthesis via de novo pathway; 5-amino-1-(5-phospho-D-ribosyl)imidazole-4-carboxamide from 5-amino-1-(5-phospho-D-ribosyl)imidazole-4-carboxylate: step 1/2. The chain is Phosphoribosylaminoimidazole-succinocarboxamide synthase from Shewanella baltica (strain OS155 / ATCC BAA-1091).